Here is a 501-residue protein sequence, read N- to C-terminus: Probable pectate lyase 13 (501 aa).

Residues 1–22 form the signal peptide; the sequence is MLLQNFSNTIFLLCLFFTLLSA. N-linked (GlcNAc...) asparagine glycosylation is found at N27 and N49. Positions 55–78 are disordered; sequence RQLSSPSSSSSSSSSSSSSSCRTG. Residues 58–74 are compositionally biased toward low complexity; sequence SSPSSSSSSSSSSSSSS. 3 residues coordinate Ca(2+): D217, D241, and D245. The active site involves R297. Disordered stretches follow at residues 329–359 and 408–463; these read INSQ…DGEW and NAGV…SSGD. Basic and acidic residues predominate over residues 343-357; the sequence is SAKEVTKRVDSKDDG. A compositionally biased stretch (gly residues) spans 430 to 449; it reads GGDGGGGGSSGGSSGGGMDV. Low complexity predominate over residues 450–463; that stretch reads MGGTTRGSSSSSGD. S474 is lipidated: GPI-anchor amidated serine. A propeptide spans 475-501 (removed in mature form); that stretch reads DAPSRPRLTLLFSLLMISVLSLSTLLL.

The protein belongs to the polysaccharide lyase 1 family. Requires Ca(2+) as cofactor. In terms of tissue distribution, expressed equally in mature leaves, buds, flowers, rosettes and roots.

It is found in the cell membrane. It carries out the reaction Eliminative cleavage of (1-&gt;4)-alpha-D-galacturonan to give oligosaccharides with 4-deoxy-alpha-D-galact-4-enuronosyl groups at their non-reducing ends.. The protein operates within glycan metabolism; pectin degradation; 2-dehydro-3-deoxy-D-gluconate from pectin: step 2/5. In terms of biological role, susceptibility factor required for infection by most powdery mildews, but not by unrelated pathogens. Exact function not known, but clearly affects cell wall composition. This Arabidopsis thaliana (Mouse-ear cress) protein is Probable pectate lyase 13 (PMR6).